Here is a 360-residue protein sequence, read N- to C-terminus: Photosystem II protein D1 2 (360 aa).

Helical transmembrane passes span 29–46 (YVGWFGVLMIPTLLTATI), 118–133 (HFLIGVFCYMGREWEL), and 142–156 (WICVAYSAPVAAATA). His-118 contacts chlorophyll a. Tyr-126 contacts pheophytin a. Residues Asp-170 and Glu-189 each coordinate [CaMn4O5] cluster. The chain crosses the membrane as a helical span at residues 197-218 (FHMLGVAGVFGGSLFSAMHGSL). His-198 lines the chlorophyll a pocket. A quinone contacts are provided by residues His-215 and 264–265 (SF). Residue His-215 coordinates Fe cation. Residue His-272 participates in Fe cation binding. Residues 274-288 (FLAAWPVVGIWFTSL) traverse the membrane as a helical segment. Residues His-332, Glu-333, Asp-342, and Ala-344 each contribute to the [CaMn4O5] cluster site. A propeptide spanning residues 345–360 (AGEATPVALTAPAING) is cleaved from the precursor.

It belongs to the reaction center PufL/M/PsbA/D family. In terms of assembly, PSII is composed of 1 copy each of membrane proteins PsbA, PsbB, PsbC, PsbD, PsbE, PsbF, PsbH, PsbI, PsbJ, PsbK, PsbL, PsbM, PsbT, PsbX, PsbY, PsbZ, Psb30/Ycf12, peripheral proteins PsbO, CyanoQ (PsbQ), PsbU, PsbV and a large number of cofactors. It forms dimeric complexes. The D1/D2 heterodimer binds P680, chlorophylls that are the primary electron donor of PSII, and subsequent electron acceptors. It shares a non-heme iron and each subunit binds pheophytin, quinone, additional chlorophylls, carotenoids and lipids. D1 provides most of the ligands for the Mn4-Ca-O5 cluster of the oxygen-evolving complex (OEC). There is also a Cl(-1) ion associated with D1 and D2, which is required for oxygen evolution. The PSII complex binds additional chlorophylls, carotenoids and specific lipids. serves as cofactor. Tyr-161 forms a radical intermediate that is referred to as redox-active TyrZ, YZ or Y-Z. In terms of processing, C-terminally processed by CtpA; processing is essential to allow assembly of the oxygen-evolving complex and thus photosynthetic growth.

The protein resides in the cellular thylakoid membrane. The catalysed reaction is 2 a plastoquinone + 4 hnu + 2 H2O = 2 a plastoquinol + O2. In terms of biological role, photosystem II (PSII) is a light-driven water:plastoquinone oxidoreductase that uses light energy to abstract electrons from H(2)O, generating O(2) and a proton gradient subsequently used for ATP formation. It consists of a core antenna complex that captures photons, and an electron transfer chain that converts photonic excitation into a charge separation. The D1/D2 (PsbA/PsbD) reaction center heterodimer binds P680, the primary electron donor of PSII as well as several subsequent electron acceptors. This chain is Photosystem II protein D1 2, found in Synechococcus elongatus (strain ATCC 33912 / PCC 7942 / FACHB-805) (Anacystis nidulans R2).